Here is a 501-residue protein sequence, read N- to C-terminus: Myosin heavy chain, embryonic smooth muscle isoform (501 aa).

Positions 1-457 (REAREKETKA…TLKNRLRRGG (457 aa)) form a coiled coil. The segment at 1–501 (REAREKETKA…VNETQPPQSE (501 aa)) is rodlike tail (S2 and LMM domains). 3 disordered regions span residues 182-202 (YQRELEEARGSRDEIFAQSKE), 221-254 (LASSERARRHAEQERDELADEIANSASGKSALLD), and 397-501 (MEKA…PQSE). Basic and acidic residues predominate over residues 223-233 (SSERARRHAEQ). Positions 492 to 501 (VNETQPPQSE) are enriched in polar residues.

Muscle myosin is a hexameric protein that consists of 2 heavy chain subunits (MHC), 2 alkali light chain subunits (MLC) and 2 regulatory light chain subunits (MLC-2).

Its subcellular location is the cytoplasm. The protein localises to the myofibril. Functionally, muscle contraction. The protein is Myosin heavy chain, embryonic smooth muscle isoform of Oryctolagus cuniculus (Rabbit).